The following is a 400-amino-acid chain: Nicotinate phosphoribosyltransferase (400 aa).

His-220 carries the post-translational modification Phosphohistidine; by autocatalysis.

Belongs to the NAPRTase family. Transiently phosphorylated on a His residue during the reaction cycle. Phosphorylation strongly increases the affinity for substrates and increases the rate of nicotinate D-ribonucleotide production. Dephosphorylation regenerates the low-affinity form of the enzyme, leading to product release.

It carries out the reaction nicotinate + 5-phospho-alpha-D-ribose 1-diphosphate + ATP + H2O = nicotinate beta-D-ribonucleotide + ADP + phosphate + diphosphate. It functions in the pathway cofactor biosynthesis; NAD(+) biosynthesis; nicotinate D-ribonucleotide from nicotinate: step 1/1. Catalyzes the synthesis of beta-nicotinate D-ribonucleotide from nicotinate and 5-phospho-D-ribose 1-phosphate at the expense of ATP. This chain is Nicotinate phosphoribosyltransferase, found in Enterobacter sp. (strain 638).